Here is a 489-residue protein sequence, read N- to C-terminus: Beta-1,3-glucosyltransferase (489 aa).

A topological domain (cytoplasmic) is located at residue M1. A helical; Signal-anchor for type II membrane protein transmembrane segment spans residues 2–22 (RPPALLALFSCSAAFALMSEE). Topologically, residues 23–489 (IKEKVTPSQD…ETQKDPREEL (467 aa)) are lumenal. Residue N78 is glycosylated (N-linked (GlcNAc...) asparagine). The Prevents secretion from ER motif lies at 486–489 (REEL).

The protein belongs to the glycosyltransferase 31 family.

Its subcellular location is the endoplasmic reticulum membrane. It functions in the pathway protein modification; protein glycosylation. O-glucosyltransferase that transfers glucose toward fucose with a beta-1,3 linkage. Specifically glucosylates O-linked fucosylglycan on TSP type-1 domains of proteins, thereby contributing to elongation of O-fucosylglycan. This Mus musculus (Mouse) protein is Beta-1,3-glucosyltransferase.